We begin with the raw amino-acid sequence, 297 residues long: Acetylglutamate kinase (297 aa).

Substrate is bound by residues 70–71 (GG), Arg92, and Asn194.

The protein belongs to the acetylglutamate kinase family. ArgB subfamily.

The protein resides in the cytoplasm. The catalysed reaction is N-acetyl-L-glutamate + ATP = N-acetyl-L-glutamyl 5-phosphate + ADP. It functions in the pathway amino-acid biosynthesis; L-arginine biosynthesis; N(2)-acetyl-L-ornithine from L-glutamate: step 2/4. Functionally, catalyzes the ATP-dependent phosphorylation of N-acetyl-L-glutamate. The polypeptide is Acetylglutamate kinase (Janthinobacterium sp. (strain Marseille) (Minibacterium massiliensis)).